Consider the following 395-residue polypeptide: Mitogen-activated protein kinase 6 (395 aa).

The tract at residues 1–35 (MDGGSGQPAADTEMTEAPGGFPAAAPSPQMPGIEN) is disordered. The span at 17–27 (APGGFPAAAPS) shows a compositional bias: low complexity. The Protein kinase domain occupies 63 to 348 (KPPIMPIGKG…VLDALAHPYL (286 aa)). Residues 69-77 (IGKGAYGIV) and K92 contribute to the ATP site. D189 functions as the Proton acceptor in the catalytic mechanism. At T221 the chain carries Phosphothreonine. A TXY motif is present at residues 221–223 (TEY). At Y223 the chain carries Phosphotyrosine. A Phosphothreonine modification is found at T226.

The protein belongs to the protein kinase superfamily. CMGC Ser/Thr protein kinase family. MAP kinase subfamily. As to quaternary structure, interacts with MEKK1, MKK1 and MKK2. May form a ternary complex with MEKK1 and MKK1 or MKK2. Interacts with NDPK2, AP2C1, MKP1 and PTP1. Interacts with DSPTP1B/MKP2, especially during HR-like responses triggered by fungal elicitors. Interacts with MKK4, MKK5 and MKK6. Binds to LIP5. Interacts with VQ4 and IKU1/VQ14. Interacts with RACK1A, RACK1B and RACK1C. Interacts with PTP1. Interacts with FLZ9. Binds to BASL and YDA. Dually phosphorylated on Thr-221 and Tyr-223, which activates the enzyme. Dephosphorylated by DSPTP1B/MKP2.

It is found in the cytoplasm. The protein localises to the nucleus. It localises to the cell cortex. The enzyme catalyses L-seryl-[protein] + ATP = O-phospho-L-seryl-[protein] + ADP + H(+). It catalyses the reaction L-threonyl-[protein] + ATP = O-phospho-L-threonyl-[protein] + ADP + H(+). Activated by threonine and tyrosine phosphorylation. Activated by the MAP kinase kinases MKK2, MKK3, MKK4, MKK5, MKK7 and MKK9. Activated in response to touch, wounding, low temperature, low humidity, salt stress, hydrogen peroxide, ozone, ACC (an ethylene precursor), jasmonic acid (JA), mastoparan and UVC. Activated in response to elicitors: oligogalacturonides, hexameric chitin fragments, fungal xylanase, and the bacterial flagellin and harpin. Activated upon Pseudomonas syringae pv. tomato DC3000 infection. Repressed by the protein phosphatase 2C AP2C1 and the protein-tyrosine-phosphatases MKP1 and PTP1. Repressed by DSPTP1B/MKP2-mediated dephosphorylation. Activated by polarized BASL. Triggered by MKKK20 in response to various abiotic stresses, including osmotic stress, cold and reactive oxygen species (ROS). Activated by MKK5 in response to abscisic acid (ABA). Mitogen-activated protein kinase (MAPK) which regulates abscisic acid (ABA) responses in a MAPKKK20-MKK5-MPK6 cascade involved in root growth (e.g. root cell division and elongation) and stomatal response. Involved in oxidative stress-mediated signaling cascade (such as ozone). Involved in the innate immune MAP kinase signaling cascade (MEKK1, MKK4/MKK5 and MPK3/MPK6) downstream of bacterial flagellin receptor FLS2. May be involved in hypersensitive response (HR)-mediated signaling cascade by modulating LIP5 phosphorylation and subsequent multivesicular bodies (MVBs) trafficking. May phosphorylate regulators of WRKY transcription factors. Phosphorylates 1-aminocyclopropane-1-carboxylic acid synthases (ACS2 and ACS6) and may be involved in the regulation of bacterial elicitor flagellin-induced ethylene production. Regulates locally gene-mediated and basal resistance response to certain pathogens. May be involved in the cold and salinity stress-mediated MAP kinase signaling cascade (MEKK1, MKK1/MKK2 and MPK4/MPK6). MKK1-MPK6 module mediates abscisic acid (ABA)-dependent CAT1 expression with H(2)O(2) production and response to drought and salt stress. MKK1-MPK6 module is also involved in sugar signaling during the process of seed germination. MKK3-MPK6 module plays an important role in the jasmonate signal transduction pathway through the negative regulation of MYC2/JIN1 expression. MKK9-MPK3/MPK6 module phosphorylates and activates EIN3, leading to the promotion of EIN3-mediated transcription in ethylene signaling. MPK3/MPK6 cascade regulates camalexin synthesis through transcriptional regulation of the biosynthetic genes after pathogen infection. MKK9-MPK6 module positively regulates leaf senescence. YDA-MKK4/MKK5-MPK3/MPK6 module regulates stomatal cell fate before the guard mother cell (GMC) is specified. When activated, reinforces the feedback loop by phosphorylating BASL, and inhibits stomatal fate by phosphorylating SPCH. This MAPK cascade also functions downstream of the ER receptor in regulating coordinated local cell proliferation, which shapes the morphology of plant organs. This chain is Mitogen-activated protein kinase 6, found in Arabidopsis thaliana (Mouse-ear cress).